Reading from the N-terminus, the 415-residue chain is Serine hydroxymethyltransferase (415 aa).

(6S)-5,6,7,8-tetrahydrofolate-binding positions include leucine 119 and 123 to 125; that span reads GHL. N6-(pyridoxal phosphate)lysine is present on lysine 228. Residue 353–355 coordinates (6S)-5,6,7,8-tetrahydrofolate; sequence SAF.

The protein belongs to the SHMT family. As to quaternary structure, homodimer. Pyridoxal 5'-phosphate serves as cofactor.

The protein localises to the cytoplasm. It catalyses the reaction (6R)-5,10-methylene-5,6,7,8-tetrahydrofolate + glycine + H2O = (6S)-5,6,7,8-tetrahydrofolate + L-serine. It functions in the pathway one-carbon metabolism; tetrahydrofolate interconversion. The protein operates within amino-acid biosynthesis; glycine biosynthesis; glycine from L-serine: step 1/1. Functionally, catalyzes the reversible interconversion of serine and glycine with tetrahydrofolate (THF) serving as the one-carbon carrier. Also exhibits THF-independent aldolase activity toward beta-hydroxyamino acids, producing glycine and aldehydes, via a retro-aldol mechanism. In Halobacterium salinarum (strain ATCC 29341 / DSM 671 / R1), this protein is Serine hydroxymethyltransferase.